We begin with the raw amino-acid sequence, 380 residues long: Tetratricopeptide repeat protein 19, mitochondrial (380 aa).

Residues 1–70 constitute a mitochondrion transit peptide; the sequence is MFRLLSWSLG…AALAWFSRPA (70 aa). TPR repeat units follow at residues 136-169, 179-212, 237-270, 279-312, and 318-351; these read TYTY…LLGG, IEIS…LEEK, GMCL…SEEI, IVLM…ARQI, and HMVL…AKLK.

Belongs to the TTC19 family. In terms of assembly, binds to the mature mitochondrial complex III dimer, after the incorporation of the Rieske protein UQCRFS1. Interacts with UQCRC1 and UQCRFS1. Interacts with ZFYVE26 and CHMP4B. Post-translationally, proteolytically cleaved by PARL.

Its subcellular location is the mitochondrion inner membrane. Functionally, required for the preservation of the structural and functional integrity of mitochondrial respiratory complex III by allowing the physiological turnover of the Rieske protein UQCRFS1. Involved in the clearance of UQCRFS1 N-terminal fragments, which are produced upon incorporation of UQCRFS1 into the complex III and whose presence is detrimental for its catalytic activity. This is Tetratricopeptide repeat protein 19, mitochondrial (TTC19) from Homo sapiens (Human).